The sequence spans 150 residues: Avidin-related protein 4/5 (150 aa).

An N-terminal signal peptide occupies residues 1 to 24; the sequence is MVHTTSPLLLLLLLSLALVAPSLS. The 122-residue stretch at 26–147 folds into the Avidin-like domain; that stretch reads RKCSLTGKWT…GYNNFTRLCT (122 aa). Cysteines 28 and 105 form a disulfide. Residues Asn36, Ser40, Tyr57, Thr59, and Asp63 each coordinate biotin. 2 N-linked (GlcNAc...) asparagine glycosylation sites follow: Asn67 and Asn93. Positions 95 and 140 each coordinate biotin. Asn141 is a glycosylation site (N-linked (GlcNAc...) asparagine).

Belongs to the avidin/streptavidin family. In terms of assembly, homotetramer.

Its subcellular location is the secreted. Functionally, forms a strong non-covalent specific complex with biotin. This is Avidin-related protein 4/5 (AVR4) from Gallus gallus (Chicken).